The sequence spans 113 residues: UPF0251 protein Teth514_1147 (113 aa).

Belongs to the UPF0251 family.

The polypeptide is UPF0251 protein Teth514_1147 (Thermoanaerobacter sp. (strain X514)).